Consider the following 374-residue polypeptide: 4-hydroxybenzoate polyprenyltransferase, mitochondrial (374 aa).

The N-terminal 63 residues, 1–63 (MLRLGGAGLV…RALSLSAAAV (63 aa)), are a transit peptide targeting the mitochondrion. At 64-83 (VNSAPRPLQPYLRLMRLDKP) the chain is on the mitochondrial matrix side. The helical transmembrane segment at 84-104 (IGTWLLYLPCTWSIGLAADPG) threads the bilayer. The Mitochondrial intermembrane portion of the chain corresponds to 105–108 (CFPD). A helical membrane pass occupies residues 109–129 (WYMLSLFGTGAILMRGAGCTI). Topologically, residues 130 to 153 (NDMWDRDFDKKVERTANRPIAAGD) are mitochondrial matrix. A helical transmembrane segment spans residues 154–174 (ISAFQSFVFLGAQLTLALGVL). Residues 175–176 (LH) are Mitochondrial intermembrane-facing. A helical transmembrane segment spans residues 177–197 (LNYYSIAMGAASLLLVVTYPL). The Mitochondrial matrix portion of the chain corresponds to 198-200 (MKR). Residues 201-221 (VTFWPQLALGLTFNWGALLGW) form a helical membrane-spanning segment. The Mitochondrial intermembrane segment spans residues 222 to 230 (SAVKGSCDP). The helical transmembrane segment at 231 to 251 (AVCLPLYFSGVMWTLIYDTIY) threads the bilayer. Residues 252–277 (AHQDKKDDALIGLKSTALLFRENTKQ) lie on the Mitochondrial matrix side of the membrane. The helical transmembrane segment at 278-298 (WLSGFGVAMVGALSLVGASSG) threads the bilayer. The Mitochondrial intermembrane portion of the chain corresponds to 299–300 (QT). Residues 301 to 321 (LPYYAAVAAVGAHLAHQIYTV) form a helical membrane-spanning segment. The Mitochondrial matrix portion of the chain corresponds to 322 to 332 (DIHRAEDCWEK). The helical transmembrane segment at 333–353 (FTSNRTVGLLLFLGIVLGNLY) threads the bilayer. Topologically, residues 354 to 374 (KDKPDETKGVDAVGEESERTS) are mitochondrial intermembrane.

This sequence belongs to the UbiA prenyltransferase family. It depends on Mg(2+) as a cofactor.

Its subcellular location is the mitochondrion inner membrane. It carries out the reaction an all-trans-polyprenyl diphosphate + 4-hydroxybenzoate = a 4-hydroxy-3-(all-trans-polyprenyl)benzoate + diphosphate. The catalysed reaction is all-trans-decaprenyl diphosphate + 4-hydroxybenzoate = 4-hydroxy-3-(all-trans-decaprenyl)benzoate + diphosphate. The enzyme catalyses all-trans-nonaprenyl diphosphate + 4-hydroxybenzoate = 4-hydroxy-3-(all-trans-nonaprenyl)benzoate + diphosphate. The protein operates within cofactor biosynthesis; ubiquinone biosynthesis. In terms of biological role, mediates the second step in the final reaction sequence of coenzyme Q (CoQ) biosynthesis. Catalyzes the prenylation of para-hydroxybenzoate (PHB) with an all-trans polyprenyl group (such as all-trans-nonaprenyl diphosphate). The length of the polyprenyl side chain varies depending on the species, in humans, the side chain is comprised of 10 isoprenyls producing CoQ10 (also known as ubiquinone), whereas rodents predominantly generate CoQ9. However, this specificity is not complete, human tissues have low amounts of CoQ9 and rodent organs contain some CoQ10. Plays a central role in the biosynthesis of CoQ9. CoQ9 is a vital molecule that transports electrons from mitochondrial respiratory chain complexes. CoQs also function as cofactors for uncoupling protein and plays a role as regulator of the extracellularly-induced ceramide-dependent apoptotic pathway. Regulates mitochondrial permeability transition pore (mPTP) opening and ROS production (pivotal events in cell death) in a tissue specific manner. This chain is 4-hydroxybenzoate polyprenyltransferase, mitochondrial, found in Rattus norvegicus (Rat).